Consider the following 327-residue polypeptide: Aspartate--ammonia ligase (327 aa).

Belongs to the class-II aminoacyl-tRNA synthetase family. AsnA subfamily.

It localises to the cytoplasm. It catalyses the reaction L-aspartate + NH4(+) + ATP = L-asparagine + AMP + diphosphate + H(+). Its pathway is amino-acid biosynthesis; L-asparagine biosynthesis; L-asparagine from L-aspartate (ammonia route): step 1/1. This chain is Aspartate--ammonia ligase, found in Bacillus cytotoxicus (strain DSM 22905 / CIP 110041 / 391-98 / NVH 391-98).